Here is a 440-residue protein sequence, read N- to C-terminus: Gap junction alpha-8 protein (440 aa).

The stretch at 2–12 (GDWSFLGNILE) is an intramembrane region. Residues 13–21 (EVNEHSTVI) lie on the Cytoplasmic side of the membrane. Residues 22 to 42 (GRVWLTVLFIFRILILGTAAE) form a helical membrane-spanning segment. At 43 to 71 (FVWGDEQSDFVCNTQQPGCENVCYDEAFP) the chain is on the extracellular side. 3 cysteine pairs are disulfide-bonded: Cys54–Cys201, Cys61–Cys195, and Cys65–Cys190. A helical membrane pass occupies residues 72–92 (ISHIRLWVLQIIFVSTPSLMY). The Cytoplasmic portion of the chain corresponds to 93–161 (VGHAVHHVRM…GTLLRTYVCH (69 aa)). Residues 111–143 (AEELCQQSRSNGGERVPIAPDQASIRKSSSSSK) are disordered. A helical transmembrane segment spans residues 162–182 (IIFKTLFEVGFIVGHYFLYGF). The Extracellular segment spans residues 183–210 (RILPLYRCSRWPCPNVVDCFVSRPTEKT). The chain crosses the membrane as a helical span at residues 211 to 231 (IFILFMLSVAFVSLFLNIMEM). Over 232-440 (SHLGMKGIRS…SRARSDDLTI (209 aa)) the chain is Cytoplasmic. The tract at residues 338–440 (VEREEPPIEE…SRARSDDLTI (103 aa)) is disordered. 2 stretches are compositionally biased toward basic and acidic residues: residues 353 to 364 (VGEKKQEAEKVA) and 374 to 399 (PDRE…EKVT). Positions 423–432 (LSRLSKASSR) are enriched in low complexity.

It belongs to the connexin family. Alpha-type (group II) subfamily. As to quaternary structure, a hemichannel or connexon is composed of a hexamer of connexins. A functional gap junction is formed by the apposition of two hemichannels. Forms heteromeric channels with GJA3. As to expression, detected in eye lens (at protein level). Eye lens.

It localises to the cell membrane. It is found in the cell junction. Its subcellular location is the gap junction. In terms of biological role, structural component of eye lens gap junctions. Gap junctions are dodecameric channels that connect the cytoplasm of adjoining cells. They are formed by the docking of two hexameric hemichannels, one from each cell membrane. Small molecules and ions diffuse from one cell to a neighboring cell via the central pore. The polypeptide is Gap junction alpha-8 protein (Gja8) (Mus musculus (Mouse)).